The primary structure comprises 181 residues: ABC transporter E family member 3 (181 aa).

Residues 20–176 enclose the ABC transporter domain; that stretch reads SQIIVMLGEN…KAAFARFHNG (157 aa). 27–34 is an ATP binding site; it reads GENGTGKT.

It belongs to the ABC transporter superfamily. ABCE family. Mostly expressed in roots and leaves, and, to a lower extent, in stems, flowers and siliques.

In Arabidopsis thaliana (Mouse-ear cress), this protein is ABC transporter E family member 3 (ABCE3).